We begin with the raw amino-acid sequence, 374 residues long: MDDLCEANGTFAISLFKILGEEDNSRNVFFSPMSISSALAMVFMGAKGSTAAQMSQALCLYKDGDIHRGFQSLLSEVNRTGTQYLLRTANRLFGEKTCDFLPDFKEYCQKFYQAELEELSFAEDTEECRKHINDWVAEKTEGKISEVLDAGTVDPLTKLVLVNAIYFKGKWNEQFDRKYTRGMLFKTNEEKKTVQMMFKEAKFKMGYADEVHTQVLELPYVEEELSMVILLPDDNTDLAVVEKALTYEKFKAWTNSEKLTKSKVQVFLPRLKLEESYDLEPFLRRLGMIDAFDEAKADFSGMSTEKNVPLSKVAHKCFVEVNEEGTEAAAATAVVRNSRCSRMEPRFCADHPFLFFIRHHKTNCILFCGRFSSP.

This sequence belongs to the serpin family. Ov-serpin subfamily.

It localises to the cytoplasm. In terms of biological role, has an important role in epithelial desmosome-mediated cell-cell adhesion. This is Serpin B8 (SERPINB8) from Homo sapiens (Human).